The chain runs to 123 residues: uncharacterized protein (123 aa).

Polar residues predominate over residues 1 to 12 (MALNNVSLSSGD). Disordered stretches follow at residues 1 to 25 (MALN…SHGD) and 53 to 91 (PRQA…RFSP). Over residues 61 to 82 (VRAESRRVDGGGRSPREPDGRG) the composition is skewed to basic and acidic residues.

This is an uncharacterized protein from Homo sapiens (Human).